The following is a 641-amino-acid chain: Transcription termination factor MTERF2, chloroplastic (641 aa).

Disordered regions lie at residues 54-80 and 606-641; these read LKLN…DLDG and FEAG…DLTE. Over residues 610–641 the composition is skewed to acidic residues; it reads LDSEDSQPSDENISDQEIAFSDEAEEEEDLTE.

This sequence belongs to the mTERF family.

The protein resides in the plastid. Its subcellular location is the chloroplast. Its function is as follows. Transcription termination factor involved in processing of plastid transcripts. Essential for embryogenesis. The protein is Transcription termination factor MTERF2, chloroplastic of Arabidopsis thaliana (Mouse-ear cress).